We begin with the raw amino-acid sequence, 197 residues long: Recombination protein RecR (197 aa).

The C4-type zinc-finger motif lies at 56–71 (CERCNTFTETEICQRC). In terms of domain architecture, Toprim spans 79–174 (SLLCVVEMPA…RVSRLSRGVP (96 aa)).

It belongs to the RecR family.

In terms of biological role, may play a role in DNA repair. It seems to be involved in an RecBC-independent recombinational process of DNA repair. It may act with RecF and RecO. The protein is Recombination protein RecR of Aromatoleum aromaticum (strain DSM 19018 / LMG 30748 / EbN1) (Azoarcus sp. (strain EbN1)).